The primary structure comprises 297 residues: tRNA-cytidine(32) 2-sulfurtransferase (297 aa).

A PP-loop motif motif is present at residues 45–50; that stretch reads SGGKDS. [4Fe-4S] cluster-binding residues include cysteine 120, cysteine 123, and cysteine 211.

The protein belongs to the TtcA family. In terms of assembly, homodimer. Requires Mg(2+) as cofactor. It depends on [4Fe-4S] cluster as a cofactor.

It localises to the cytoplasm. It catalyses the reaction cytidine(32) in tRNA + S-sulfanyl-L-cysteinyl-[cysteine desulfurase] + AH2 + ATP = 2-thiocytidine(32) in tRNA + L-cysteinyl-[cysteine desulfurase] + A + AMP + diphosphate + H(+). It functions in the pathway tRNA modification. Catalyzes the ATP-dependent 2-thiolation of cytidine in position 32 of tRNA, to form 2-thiocytidine (s(2)C32). The sulfur atoms are provided by the cysteine/cysteine desulfurase (IscS) system. The polypeptide is tRNA-cytidine(32) 2-sulfurtransferase (Vibrio parahaemolyticus serotype O3:K6 (strain RIMD 2210633)).